The following is a 378-amino-acid chain: Ferredoxin--NADP reductase, root isozyme 1, chloroplastic (378 aa).

A chloroplast-targeting transit peptide spans 1–65 (MALSTTPSQM…KRSTICMSLQ (65 aa)). Positions 93–221 (KEPYTATIVS…TGPSGKVMLL (129 aa)) constitute an FAD-binding FR-type domain. Cysteines 196 and 201 form a disulfide. Ser-197 bears the Phosphoserine mark. Thr-229 is modified (phosphothreonine). 231–249 (IMIATGTGVAPYRGYLRRM) contacts NADP(+). Positions 349–373 (LKRVAEERGESWEQKLTQLRKNKQW) form a coiled coil.

It belongs to the ferredoxin--NADP reductase type 1 family. FAD serves as cofactor. As to expression, expressed in shoots and roots. Less abundant in roots than RFNR2.

It is found in the plastid. It localises to the chloroplast. It catalyses the reaction 2 reduced [2Fe-2S]-[ferredoxin] + NADP(+) + H(+) = 2 oxidized [2Fe-2S]-[ferredoxin] + NADPH. Functionally, maintains the supply of reduced ferredoxin under non-photosynthetic conditions. The sequence is that of Ferredoxin--NADP reductase, root isozyme 1, chloroplastic (RFNR1) from Arabidopsis thaliana (Mouse-ear cress).